The sequence spans 381 residues: Heterogeneous nuclear rnp K-like protein 2 (381 aa).

The disordered stretch occupies residues 1–34 (MSQFFEAATPVAIPTNNTNGGSSDAGSAATGGAP). Low complexity predominate over residues 15–33 (TNNTNGGSSDAGSAATGGA). KH domains are found at residues 43–107 (TINH…IGDI), 156–221 (IGYV…LIEI), and 258–326 (NTRI…ESML). The disordered stretch occupies residues 357 to 381 (RSDSASFLEEKEEPQKNHDNKEEQS). Residues serine 358, serine 360, and serine 362 each carry the phosphoserine modification. Positions 369 to 381 (EPQKNHDNKEEQS) are enriched in basic and acidic residues.

It belongs to the HEK2 family. As to quaternary structure, binds RNA. Phosphorylated by the plasma membrane-Anchored casein kinase YCK1. Phosphorylation at its C-terminus reduces its RNA-binding capacity.

It localises to the cytoplasm. It is found in the P-body. The protein localises to the nucleus. The protein resides in the chromosome. Its subcellular location is the telomere. RNA-binding protein involved in the correct localization of transcripts in the cell. RNA localization is a widespread mechanism for achieving localized protein synthesis. Required for the asymmetric localization to the daughter cell nucleus of the ASH1 transcript, coding for a specific repressor of transcription. Overexpression inhibits translation of the ASH1 transcript. Involved in the stability of transcripts, like the MTL1 mRNA. Involved in structural and functional organization of telomeric chromatin and regulates silencing at the HMR locus. The chain is Heterogeneous nuclear rnp K-like protein 2 (HEK2) from Saccharomyces cerevisiae (strain RM11-1a) (Baker's yeast).